The following is a 294-amino-acid chain: tRNA dimethylallyltransferase (294 aa).

Residue 10-17 participates in ATP binding; sequence GPTAVGKT. 12–17 is a substrate binding site; the sequence is TAVGKT. The tract at residues 35-38 is interaction with substrate tRNA; it reads DSQQ.

It belongs to the IPP transferase family. In terms of assembly, monomer. Requires Mg(2+) as cofactor.

It catalyses the reaction adenosine(37) in tRNA + dimethylallyl diphosphate = N(6)-dimethylallyladenosine(37) in tRNA + diphosphate. In terms of biological role, catalyzes the transfer of a dimethylallyl group onto the adenine at position 37 in tRNAs that read codons beginning with uridine, leading to the formation of N6-(dimethylallyl)adenosine (i(6)A). The sequence is that of tRNA dimethylallyltransferase from Streptococcus pneumoniae serotype 2 (strain D39 / NCTC 7466).